A 349-amino-acid polypeptide reads, in one-letter code: Ribosome production factor 1 (349 aa).

2 disordered regions span residues 1 to 58 and 71 to 105; these read MAKA…SEIK and KQQQ…PKTI. A compositionally biased stretch (basic and acidic residues) spans 87 to 97; the sequence is KEREALGDKAP. The 184-residue stretch at 142 to 325 folds into the Brix domain; the sequence is PKILITTSDR…LRSLQKGTFD (184 aa). The tract at residues 303 to 320 is RNA-binding; sequence VGIQELGPRFTLKLRSLQ.

It is found in the nucleus. Its subcellular location is the nucleolus. Its function is as follows. May be required for ribosome biogenesis. This Mus musculus (Mouse) protein is Ribosome production factor 1 (Rpf1).